Reading from the N-terminus, the 957-residue chain is Glycine dehydrogenase (decarboxylating) (957 aa).

An N6-(pyridoxal phosphate)lysine modification is found at Lys-708.

The protein belongs to the GcvP family. The glycine cleavage system is composed of four proteins: P, T, L and H. It depends on pyridoxal 5'-phosphate as a cofactor.

It catalyses the reaction N(6)-[(R)-lipoyl]-L-lysyl-[glycine-cleavage complex H protein] + glycine + H(+) = N(6)-[(R)-S(8)-aminomethyldihydrolipoyl]-L-lysyl-[glycine-cleavage complex H protein] + CO2. The glycine cleavage system catalyzes the degradation of glycine. The P protein binds the alpha-amino group of glycine through its pyridoxal phosphate cofactor; CO(2) is released and the remaining methylamine moiety is then transferred to the lipoamide cofactor of the H protein. The polypeptide is Glycine dehydrogenase (decarboxylating) (Klebsiella pneumoniae (strain 342)).